The sequence spans 603 residues: Elongation factor 4 (603 aa).

One can recognise a tr-type G domain in the interval 7–189 (SRLRNFCIIA…AVVDRIPSPK (183 aa)). GTP is bound by residues 19–24 (DHGKST) and 136–139 (NKVD).

This sequence belongs to the TRAFAC class translation factor GTPase superfamily. Classic translation factor GTPase family. LepA subfamily.

The protein resides in the cell inner membrane. The catalysed reaction is GTP + H2O = GDP + phosphate + H(+). Its function is as follows. Required for accurate and efficient protein synthesis under certain stress conditions. May act as a fidelity factor of the translation reaction, by catalyzing a one-codon backward translocation of tRNAs on improperly translocated ribosomes. Back-translocation proceeds from a post-translocation (POST) complex to a pre-translocation (PRE) complex, thus giving elongation factor G a second chance to translocate the tRNAs correctly. Binds to ribosomes in a GTP-dependent manner. The protein is Elongation factor 4 of Prochlorococcus marinus (strain NATL1A).